The sequence spans 119 residues: Protein TusC (119 aa).

Belongs to the DsrF/TusC family. In terms of assembly, heterohexamer, formed by a dimer of trimers. The hexameric TusBCD complex contains 2 copies each of TusB, TusC and TusD. The TusBCD complex interacts with TusE.

The protein localises to the cytoplasm. In terms of biological role, part of a sulfur-relay system required for 2-thiolation of 5-methylaminomethyl-2-thiouridine (mnm(5)s(2)U) at tRNA wobble positions. The protein is Protein TusC of Serratia proteamaculans (strain 568).